The chain runs to 866 residues: Speckle targeted PIP5K1A-regulated poly(A) polymerase (866 aa).

Residues Phe-16–Leu-46 form a Matrin-type zinc finger. The RRM domain maps to Arg-56–Gln-128. Residues Leu-116 to His-147 are disordered. Ser-205 contributes to the ATP binding site. Residues Asp-216 and Asp-218 each coordinate Mg(2+). The UTP site is built by Asp-216 and Asp-218. Disordered stretches follow at residues Leu-223–Ala-249 and Leu-267–His-321. The span at Thr-282–Gln-304 shows a compositional bias: polar residues. Asn-393 contributes to the ATP binding site. The UTP site is built by Asn-393, Arg-415, Tyr-433, and His-550. Positions Leu-492–His-550 constitute a PAP-associated domain. The tract at residues Ser-599 to Lys-866 is KA1; binds the bulging loops of U6 snRNA but is dispensable for terminal uridylyltransferase activity. 3 disordered regions span residues Gln-638–Glu-687, Glu-728–Val-755, and Arg-773–Ala-792. Positions Lys-669–Glu-687 are enriched in basic and acidic residues. Ser-686 and Ser-741 each carry phosphoserine.

The protein belongs to the DNA polymerase type-B-like family. Associates with the cleavage and polyadenylation specificity factor (CPSF) complex. Interacts with CPSF1 and CPSF3; the interaction is direct. Interacts with PIP5K1A. It depends on Mg(2+) as a cofactor. The cofactor is Mn(2+). In terms of processing, phosphorylated by CK1 in the proline-rich (Pro-rich) region.

It localises to the nucleus. The protein resides in the nucleolus. The protein localises to the nucleus speckle. The enzyme catalyses RNA(n) + UTP = RNA(n)-3'-uridine ribonucleotide + diphosphate. It carries out the reaction RNA(n) + ATP = RNA(n)-3'-adenine ribonucleotide + diphosphate. With respect to regulation, adenylyltransferase activity is specifically phosphatidylinositol 4,5-bisphosphate (PtdIns(4,5)P2). Its function is as follows. Poly(A) polymerase that creates the 3'-poly(A) tail of specific pre-mRNAs. Localizes to nuclear speckles together with PIP5K1A and mediates polyadenylation of a select set of mRNAs, such as HMOX1. In addition to polyadenylation, it is also required for the 3'-end cleavage of pre-mRNAs: binds to the 3'UTR of targeted pre-mRNAs and promotes the recruitment and assembly of the CPSF complex on the 3'UTR of pre-mRNAs. In addition to adenylyltransferase activity, also has uridylyltransferase activity. However, the ATP ratio is higher than UTP in cells, suggesting that it functions primarily as a poly(A) polymerase. Acts as a specific terminal uridylyltransferase for U6 snRNA in vitro: responsible for a controlled elongation reaction that results in the restoration of the four 3'-terminal UMP-residues found in newly transcribed U6 snRNA. Not involved in replication-dependent histone mRNA degradation. The polypeptide is Speckle targeted PIP5K1A-regulated poly(A) polymerase (Tut1) (Rattus norvegicus (Rat)).